The chain runs to 1241 residues: Phosphorylase b kinase regulatory subunit alpha, skeletal muscle isoform (1241 aa).

A phosphoserine mark is found at Ser-629, Ser-730, Ser-736, Ser-739, Ser-759, Ser-812, Ser-973, Ser-982, and Ser-986. The interval Leu-811–Leu-841 is calmodulin-binding. Phosphoserine; by autocatalysis is present on Ser-1008. Position 1019 is a phosphoserine; by PKA (Ser-1019). 2 positions are modified to phosphoserine: Ser-1021 and Ser-1024. The tract at residues Ser-1064 to Ser-1104 is calmodulin-binding. Position 1131 is a phosphoserine (Ser-1131). Cys-1238 carries the S-farnesyl cysteine lipid modification.

This sequence belongs to the phosphorylase b kinase regulatory chain family. As to quaternary structure, hexadecamer of 4 heterotetramers, each composed of alpha, beta, gamma, and delta subunits. Alpha (PHKA1 or PHKA2) and beta (PHKB) are regulatory subunits, gamma (PHKG1 or PHKG2) is the catalytic subunit, and delta is calmodulin. In terms of processing, although the final Cys may be farnesylated, the terminal tripeptide is probably not removed, and the C-terminus is not methylated. Both isoforms are expressed in muscle.

It is found in the cell membrane. It functions in the pathway glycan biosynthesis; glycogen metabolism. With respect to regulation, by phosphorylation of various serine residues and by calcium. Phosphorylase b kinase catalyzes the phosphorylation of serine in certain substrates, including troponin I. The alpha chain may bind calmodulin. This Mus musculus (Mouse) protein is Phosphorylase b kinase regulatory subunit alpha, skeletal muscle isoform (Phka1).